A 112-amino-acid chain; its full sequence is Small ribosomal subunit protein bS6 (112 aa).

The protein belongs to the bacterial ribosomal protein bS6 family.

Its function is as follows. Binds together with bS18 to 16S ribosomal RNA. This is Small ribosomal subunit protein bS6 (rpsF) from Chlamydia pneumoniae (Chlamydophila pneumoniae).